The sequence spans 80 residues: RNA-binding protein Hfq (80 aa).

Residues 10-70 form the Sm domain; the sequence is DLFLNTVRKQ…ISTIMPGQPM (61 aa).

This sequence belongs to the Hfq family. In terms of assembly, homohexamer.

In terms of biological role, RNA chaperone that binds small regulatory RNA (sRNAs) and mRNAs to facilitate mRNA translational regulation in response to envelope stress, environmental stress and changes in metabolite concentrations. Also binds with high specificity to tRNAs. The protein is RNA-binding protein Hfq of Rhizobium rhizogenes (strain K84 / ATCC BAA-868) (Agrobacterium radiobacter).